The sequence spans 265 residues: MQLDRIAQDLVAALRFYSRLPLPAGRDDPDAFAVPSLNRIAYAIPLAGAVIGLIGAVVLVGALALKLPAFLASVLAVTALVLTTGAFHEDGLADTADGLGGGRDKAQRLAIMRDSRIGTYGGCALILALLLRVAALEALVASAGMFRAALALVVAEAASRAAGVLLLLALPPARADGAGASFGRPSESAGLACALVAALLVVVILVPGFGISTAFAGLIAPLVALFAMMRLSGRLIGGQTGDVAGATQQVAVIVFLLGVLIFPGR.

Transmembrane regions (helical) follow at residues I40 to V60, L67 to F87, G121 to A141, L150 to L170, L191 to I211, T213 to G233, and V243 to P263.

It belongs to the CobS family. It depends on Mg(2+) as a cofactor.

The protein resides in the cell inner membrane. It carries out the reaction alpha-ribazole + adenosylcob(III)inamide-GDP = adenosylcob(III)alamin + GMP + H(+). The catalysed reaction is alpha-ribazole 5'-phosphate + adenosylcob(III)inamide-GDP = adenosylcob(III)alamin 5'-phosphate + GMP + H(+). The protein operates within cofactor biosynthesis; adenosylcobalamin biosynthesis; adenosylcobalamin from cob(II)yrinate a,c-diamide: step 7/7. In terms of biological role, joins adenosylcobinamide-GDP and alpha-ribazole to generate adenosylcobalamin (Ado-cobalamin). Also synthesizes adenosylcobalamin 5'-phosphate from adenosylcobinamide-GDP and alpha-ribazole 5'-phosphate. This Xanthobacter autotrophicus (strain ATCC BAA-1158 / Py2) protein is Adenosylcobinamide-GDP ribazoletransferase.